Consider the following 118-residue polypeptide: Putative pterin-4-alpha-carbinolamine dehydratase (118 aa).

This sequence belongs to the pterin-4-alpha-carbinolamine dehydratase family.

It carries out the reaction (4aS,6R)-4a-hydroxy-L-erythro-5,6,7,8-tetrahydrobiopterin = (6R)-L-erythro-6,7-dihydrobiopterin + H2O. The polypeptide is Putative pterin-4-alpha-carbinolamine dehydratase (Xanthomonas campestris pv. campestris (strain B100)).